Reading from the N-terminus, the 311-residue chain is tRNA-cytidine(32) 2-sulfurtransferase (311 aa).

The short motif at 47-52 is the PP-loop motif element; the sequence is SGGKDS. The [4Fe-4S] cluster site is built by cysteine 122, cysteine 125, and cysteine 213.

The protein belongs to the TtcA family. Homodimer. Mg(2+) serves as cofactor. It depends on [4Fe-4S] cluster as a cofactor.

Its subcellular location is the cytoplasm. It catalyses the reaction cytidine(32) in tRNA + S-sulfanyl-L-cysteinyl-[cysteine desulfurase] + AH2 + ATP = 2-thiocytidine(32) in tRNA + L-cysteinyl-[cysteine desulfurase] + A + AMP + diphosphate + H(+). The protein operates within tRNA modification. In terms of biological role, catalyzes the ATP-dependent 2-thiolation of cytidine in position 32 of tRNA, to form 2-thiocytidine (s(2)C32). The sulfur atoms are provided by the cysteine/cysteine desulfurase (IscS) system. The protein is tRNA-cytidine(32) 2-sulfurtransferase of Salmonella arizonae (strain ATCC BAA-731 / CDC346-86 / RSK2980).